We begin with the raw amino-acid sequence, 564 residues long: 4-hydroxybutyrate--CoA ligase 1 (564 aa).

The chain crosses the membrane as a helical span at residues 105 to 125 (VHPMHWAVFLAVIKGGFVMVP). ATP is bound by residues 204–212 (TSGTTGMPK), 343–348 (DFYGQT), D429, and R444. Substrate is bound at residue T348. A CoA-binding site is contributed by 452–454 (SDY). Substrate is bound at residue R455. Residues R484, K513, and 521–523 (VPR) each bind CoA. K538 serves as a coordination point for ATP.

This sequence belongs to the ATP-dependent AMP-binding enzyme family. It depends on Mg(2+) as a cofactor. Requires Mn(2+) as cofactor.

It localises to the membrane. The catalysed reaction is 4-hydroxybutanoate + ATP + CoA = 4-hydroxybutanoyl-CoA + AMP + diphosphate. The enzyme catalyses acetate + ATP + CoA = acetyl-CoA + AMP + diphosphate. It carries out the reaction propanoate + ATP + CoA = propanoyl-CoA + AMP + diphosphate. It catalyses the reaction a medium-chain fatty acid + ATP + CoA = a medium-chain fatty acyl-CoA + AMP + diphosphate. Involved in the 3-hydroxypropionate/4-hydroxybutyrate cycle which incorporates carbon dioxide into cellular carbon. Catalyzes the ligation of coenzyme A (CoA) to 4-hydroxybutyrate (4HB). It can also use butyrate, valerate, propionate, acetate and 3-hydroxybutyrate (3HB) as substrates. In Metallosphaera sedula (strain ATCC 51363 / DSM 5348 / JCM 9185 / NBRC 15509 / TH2), this protein is 4-hydroxybutyrate--CoA ligase 1.